The following is a 215-amino-acid chain: MTVELEKIAGSFFISKGWKTFVHRTGLLSGQYIRFQVLTPSKINVLLFDKKKDSKLPMIPSSKKQIKTAPKRSTGITINDMPTSKHASMLISHTSNKETSSDSRTESMTDIPSSSDNSAVTPDIKNYISIIGQFLQRSSKFYIVTMNNTFMKQDRLVEAAGSDSVTMLLHKSSDDRCNLKRGWATFAATNAIHLHSVCIFHFYKAPNVKITIDVL.

The TF-B3 1 DNA-binding region spans 1 to 51; that stretch reads MTVELEKIAGSFFISKGWKTFVHRTGLLSGQYIRFQVLTPSKINVLLFDKK. The tract at residues 92 to 117 is disordered; sequence SHTSNKETSSDSRTESMTDIPSSSDN. Residues 95–107 show a composition bias toward basic and acidic residues; it reads SNKETSSDSRTES. A compositionally biased stretch (polar residues) spans 108 to 117; it reads MTDIPSSSDN. A DNA-binding region (TF-B3 2) is located at residues 123–215; it reads DIKNYISIIG…PNVKITIDVL (93 aa).

The protein resides in the nucleus. This is Putative B3 domain-containing protein Os11g0625400 from Oryza sativa subsp. japonica (Rice).